A 113-amino-acid polypeptide reads, in one-letter code: Meiotically up-regulated gene 98 protein, mitochondrial (113 aa).

Its subcellular location is the mitochondrion. In terms of biological role, has a role in meiosis. This is Meiotically up-regulated gene 98 protein, mitochondrial (mug98) from Schizosaccharomyces pombe (strain 972 / ATCC 24843) (Fission yeast).